Reading from the N-terminus, the 146-residue chain is Holo-[acyl-carrier-protein] synthase (146 aa).

The Mg(2+) site is built by D9 and E63.

It belongs to the P-Pant transferase superfamily. AcpS family. The cofactor is Mg(2+).

The protein resides in the cytoplasm. It catalyses the reaction apo-[ACP] + CoA = holo-[ACP] + adenosine 3',5'-bisphosphate + H(+). Functionally, transfers the 4'-phosphopantetheine moiety from coenzyme A to a Ser of acyl-carrier-protein. In Burkholderia ambifaria (strain ATCC BAA-244 / DSM 16087 / CCUG 44356 / LMG 19182 / AMMD) (Burkholderia cepacia (strain AMMD)), this protein is Holo-[acyl-carrier-protein] synthase.